The sequence spans 52 residues: UPF0391 membrane protein Tgr7_2500 (52 aa).

2 helical membrane passes run 4-24 (WALIFLIVAIIAGTLGFSGVA) and 29-49 (WIAQVLFLVFLALLVISLLGG).

Belongs to the UPF0391 family.

It is found in the cell membrane. This Thioalkalivibrio sulfidiphilus (strain HL-EbGR7) protein is UPF0391 membrane protein Tgr7_2500.